Here is a 518-residue protein sequence, read N- to C-terminus: Zinc finger protein 449 (518 aa).

The region spanning 30-112 (RQRFRQFQYR…SLIEDLQREL (83 aa)) is the SCAN box domain. Polar residues predominate over residues 292-304 (NPTLGETPENSNL). The disordered stretch occupies residues 292–325 (NPTLGETPENSNLEEPLNPKPHKKKSPGEKPHRC). 7 C2H2-type zinc fingers span residues 323–345 (HRCPQCGKCFARKSQLTGHQRIH), 351–373 (HKCPECGKRFLRSSDLYRHQRLH), 379–401 (YECTVCKKRFTRRSHLIGHQRTH), 407–429 (YKCLECGKSFCHGSSLKRHLKTH), 435–457 (HRCHNCGKSFSRLTALTLHQRTH), 463–485 (FKCNYCGKSFRQRPSLVIHLRIH), and 491–513 (YKCTHCSKSFRQRAGLIMHQVTH).

The protein belongs to the krueppel C2H2-type zinc-finger protein family.

The protein resides in the nucleus. Functionally, may be involved in transcriptional regulation. The chain is Zinc finger protein 449 (ZNF449) from Gorilla gorilla gorilla (Western lowland gorilla).